Here is a 92-residue protein sequence, read N- to C-terminus: Small ribosomal subunit protein bS20 (92 aa).

A disordered region spans residues 1-23; sequence MANTPSAKKRAKQAEKRRSHNAS. A compositionally biased stretch (basic residues) spans 7–20; the sequence is AKKRAKQAEKRRSH.

Belongs to the bacterial ribosomal protein bS20 family.

Its function is as follows. Binds directly to 16S ribosomal RNA. The polypeptide is Small ribosomal subunit protein bS20 (Pseudomonas entomophila (strain L48)).